A 244-amino-acid polypeptide reads, in one-letter code: Phosphatidylserine decarboxylase proenzyme (244 aa).

S212 acts as the Schiff-base intermediate with substrate; via pyruvic acid in catalysis. At S212 the chain carries Pyruvic acid (Ser); by autocatalysis.

It belongs to the phosphatidylserine decarboxylase family. PSD-A subfamily. In terms of assembly, heterodimer of a large membrane-associated beta subunit and a small pyruvoyl-containing alpha subunit. Pyruvate serves as cofactor. In terms of processing, is synthesized initially as an inactive proenzyme. Formation of the active enzyme involves a self-maturation process in which the active site pyruvoyl group is generated from an internal serine residue via an autocatalytic post-translational modification. Two non-identical subunits are generated from the proenzyme in this reaction, and the pyruvate is formed at the N-terminus of the alpha chain, which is derived from the carboxyl end of the proenzyme. The post-translation cleavage follows an unusual pathway, termed non-hydrolytic serinolysis, in which the side chain hydroxyl group of the serine supplies its oxygen atom to form the C-terminus of the beta chain, while the remainder of the serine residue undergoes an oxidative deamination to produce ammonia and the pyruvoyl prosthetic group on the alpha chain.

Its subcellular location is the cell membrane. It carries out the reaction a 1,2-diacyl-sn-glycero-3-phospho-L-serine + H(+) = a 1,2-diacyl-sn-glycero-3-phosphoethanolamine + CO2. Its pathway is phospholipid metabolism; phosphatidylethanolamine biosynthesis; phosphatidylethanolamine from CDP-diacylglycerol: step 2/2. Its function is as follows. Catalyzes the formation of phosphatidylethanolamine (PtdEtn) from phosphatidylserine (PtdSer). This is Phosphatidylserine decarboxylase proenzyme from Granulibacter bethesdensis (strain ATCC BAA-1260 / CGDNIH1).